The sequence spans 87 residues: Small ribosomal subunit protein bS20 (87 aa).

It belongs to the bacterial ribosomal protein bS20 family.

Its function is as follows. Binds directly to 16S ribosomal RNA. This chain is Small ribosomal subunit protein bS20, found in Clostridium botulinum (strain Eklund 17B / Type B).